We begin with the raw amino-acid sequence, 197 residues long: Elongation factor Ts (197 aa).

Residues threonine 81–valine 84 are involved in Mg(2+) ion dislocation from EF-Tu.

It belongs to the EF-Ts family.

The protein localises to the cytoplasm. Its function is as follows. Associates with the EF-Tu.GDP complex and induces the exchange of GDP to GTP. It remains bound to the aminoacyl-tRNA.EF-Tu.GTP complex up to the GTP hydrolysis stage on the ribosome. This is Elongation factor Ts from Coprothermobacter proteolyticus (strain ATCC 35245 / DSM 5265 / OCM 4 / BT).